The following is a 571-amino-acid chain: Proline--tRNA ligase (571 aa).

Belongs to the class-II aminoacyl-tRNA synthetase family. ProS type 1 subfamily. In terms of assembly, homodimer.

Its subcellular location is the cytoplasm. It catalyses the reaction tRNA(Pro) + L-proline + ATP = L-prolyl-tRNA(Pro) + AMP + diphosphate. Catalyzes the attachment of proline to tRNA(Pro) in a two-step reaction: proline is first activated by ATP to form Pro-AMP and then transferred to the acceptor end of tRNA(Pro). As ProRS can inadvertently accommodate and process non-cognate amino acids such as alanine and cysteine, to avoid such errors it has two additional distinct editing activities against alanine. One activity is designated as 'pretransfer' editing and involves the tRNA(Pro)-independent hydrolysis of activated Ala-AMP. The other activity is designated 'posttransfer' editing and involves deacylation of mischarged Ala-tRNA(Pro). The misacylated Cys-tRNA(Pro) is not edited by ProRS. This Shewanella frigidimarina (strain NCIMB 400) protein is Proline--tRNA ligase.